Reading from the N-terminus, the 67-residue chain is MTIINSISSLGKISNKNKSQANLNSNSTNSPNNVQGLNQNTGLVSSLLELVRGVTFALGLAVESVGL.

The tract at residues 18–37 (KSQANLNSNSTNSPNNVQGL) is disordered. The segment covering 22-33 (NLNSNSTNSPNN) has biased composition (low complexity).

This sequence belongs to the UPF0519 family.

The chain is UPF0519 protein C from Dictyostelium discoideum (Social amoeba).